A 180-amino-acid chain; its full sequence is Glycodelin (180 aa).

A signal peptide spans 1–18 (MLCLLLTLGVALVCGVPA). N-linked (GlcNAc...) (complex) asparagine glycosylation is found at Asn46 and Asn81. Intrachain disulfides connect Cys84–Cys178 and Cys124–Cys137.

This sequence belongs to the calycin superfamily. Lipocalin family. As to quaternary structure, homodimer. Four distinct glycoforms A, C, F and S arise from different N-linked oligosaccharide chains at amino acid residues Asn-46 and Asn-81. Glycodelin-A and -F are taken up by the cumulus cells in which partial deglycosylation takes place to produce glycodelin-C. This protein is, the main protein synthesized and secreted in the endometrium from mid-luteal phase of the menstrual cycle and during the first semester of pregnancy. Glycodelin-A is expressed in amniotic fluid, endometrium/decidua and maternal serum (at protein level). Glycodelin-F is expressed in follicular fluid, luteinized granulosa cells and the oviduct (at protein level). Glycodelin-S is expressed in seminal plasma and seminal vesicles (at protein level). Glycodelin-C is detected in cumulus cells (at protein level), but cumulus cells do not synthesize Glycodelin-C but take up and convert glycodelin-A and -F vis glycan remodeling.

It is found in the secreted. Its function is as follows. Glycoprotein that regulates critical steps during fertilization and also has immunomonomodulatory effects. Four glycoforms, namely glycodelin-S, -A, -F and -C have been identified in reproductive tissues that differ in glycosylation and biological activity. Glycodelin-A has contraceptive and immunosuppressive activities. Glycodelin-C stimulates binding of spermatozoa to the zona pellucida. Glycodelin-F inhibits spermatozoa-zona pellucida binding and significantly suppresses progesterone-induced acrosome reaction of spermatozoa. Glycodelin-S in seminal plasma maintains the uncapacitated state of human spermatozoa. This chain is Glycodelin (PAEP), found in Homo sapiens (Human).